We begin with the raw amino-acid sequence, 488 residues long: Capsid protein (488 aa).

The interval 79–142 (ETSEDESDSG…TQPKTIPGQK (64 aa)) is disordered. Acidic residues predominate over residues 80 to 93 (TSEDESDSGEEPEF). Over residues 94-130 (EQVRMDRTGGTEIPKKEDGAEPSRYNERKRKTTEDRY) the composition is skewed to basic and acidic residues. Residues 121 to 124 (RKRK) carry the Nuclear localization signal motif. The CCHC-type; degenerate zinc finger occupies 411 to 428 (CRCWISNIEGHYANECPN). The interval 464–488 (YKEEEEETSTEESDGSSTSEDSDSD) is disordered. A compositionally biased stretch (acidic residues) spans 465–488 (KEEEEETSTEESDGSSTSEDSDSD).

It belongs to the caulimoviridae capsid protein family. As to quaternary structure, interacts (via nuclear localization signal) with host importin alpha.

Its subcellular location is the virion. It localises to the host nucleus. Its function is as follows. Self assembles to form an icosahedral capsid, about 50 nm in diameter, nm, composed of 420 subunits of the viral capsid protein. The capsid encapsulates the genomic dsDNA. Following virus entry into host cell, provides nuclear import of the viral genome. Virus particles do not enter the nucleus, but dock at the nuclear membrane through the interaction with host importins. The sequence is that of Capsid protein from Arabidopsis thaliana (Mouse-ear cress).